A 393-amino-acid polypeptide reads, in one-letter code: Sugar efflux transporter A (393 aa).

12 consecutive transmembrane segments (helical) span residues 22–42, 51–71, 82–102, 107–127, 152–172, 174–194, 219–239, 253–273, 287–307, 308–328, 344–364, and 366–386; these read VIAF…SLFL, FMVG…SQIL, KTLI…YAWN, VLLF…PQLF, ISLS…GFGF, AMYL…WLLL, LLLF…LINM, LAGV…LLAG, LAVI…GSWA, LLAL…MGML, LFTN…GIVA, and VWSY…AAVC.

This sequence belongs to the major facilitator superfamily. Set transporter family.

It is found in the cell inner membrane. Involved in the efflux of sugars. The physiological role may be the reduction of the intracellular concentration of toxic sugars or sugar metabolites. Transports IPTG, lactose and arabinose. This chain is Sugar efflux transporter A (sotA), found in Dickeya chrysanthemi (Pectobacterium chrysanthemi).